A 260-amino-acid polypeptide reads, in one-letter code: Fibronectin type III domain-containing protein 5 (260 aa).

The disordered stretch occupies residues 1 to 56; the sequence is MQAARGGAGRPERPGRPGRGPERERERPPGAGAASPCAAPGLPAGGATIHPGSPSA. Basic and acidic residues predominate over residues 10-28; that stretch reads RPERPGRPGRGPERERERP. A compositionally biased stretch (low complexity) spans 29–56; sequence PGAGAASPCAAPGLPAGGATIHPGSPSA. Residues 84–175 enclose the Fibronectin type-III domain; sequence APVNVTVRHL…EPVLFKTPRE (92 aa). 2 N-linked (GlcNAc...) asparagine glycosylation sites follow: Asn87 and Asn132. A helical transmembrane segment spans residues 201 to 221; that stretch reads GEVLIIVVVLFMWAGVIALFC. Over residues 230–241 the composition is skewed to basic and acidic residues; sequence NEPNNNKEKTKS. The segment at 230-260 is disordered; the sequence is NEPNNNKEKTKSASETSTPEHQGGGLLRSKI. Residues 251 to 260 are compositionally biased toward gly residues; that stretch reads QGGGLLRSKI. Residues 258–260 carry the Microbody targeting signal motif; it reads SKI.

Dimer; may exist in other oligomeric forms. The extracellular domain is cleaved and released from the cell membrane. In terms of processing, N-Glycosylated. As to expression, widely expressed, with highest levels in heart. Very low expression, if any, in colon, pancreas and spleen.

It localises to the cell membrane. It is found in the peroxisome membrane. The protein resides in the secreted. In terms of biological role, mediates beneficial effects of muscular exercise. Induces browning of white adipose tissue by stimulating UCP1 expression, at least in part, via the nuclear receptor PPARA. This Homo sapiens (Human) protein is Fibronectin type III domain-containing protein 5 (FNDC5).